The chain runs to 496 residues: Probable cytosol aminopeptidase (496 aa).

Residues Lys-266 and Asp-271 each coordinate Mn(2+). Lys-278 is an active-site residue. Mn(2+)-binding residues include Asp-289, Asp-348, and Glu-350. Arg-352 is an active-site residue.

It belongs to the peptidase M17 family. Mn(2+) is required as a cofactor.

It is found in the cytoplasm. The enzyme catalyses Release of an N-terminal amino acid, Xaa-|-Yaa-, in which Xaa is preferably Leu, but may be other amino acids including Pro although not Arg or Lys, and Yaa may be Pro. Amino acid amides and methyl esters are also readily hydrolyzed, but rates on arylamides are exceedingly low.. The catalysed reaction is Release of an N-terminal amino acid, preferentially leucine, but not glutamic or aspartic acids.. Presumably involved in the processing and regular turnover of intracellular proteins. Catalyzes the removal of unsubstituted N-terminal amino acids from various peptides. This chain is Probable cytosol aminopeptidase, found in Stutzerimonas stutzeri (strain A1501) (Pseudomonas stutzeri).